We begin with the raw amino-acid sequence, 679 residues long: Protein CASP (679 aa).

Residues 1–614 (MDTSVYSHAL…VILQNKMTRM (614 aa)) lie on the Cytoplasmic side of the membrane. 2 coiled-coil regions span residues 14-90 (AKAD…EKVL) and 178-341 (RNWK…NYSD). The residue at position 364 (S364) is a Phosphoserine. The stretch at 385-444 (ANKKLQATLAEYRSKSTAQEEERNELKKSVDQLKQQIATLKEANEKLETDLEKVENVSPH) forms a coiled coil. Phosphoserine is present on residues S450 and S453. Residues 492–540 (IVTKQRDRFRSRNMDLEKQLRQGNSEKGKLKLEISKLKGDNTKLYERIR) adopt a coiled-coil conformation. Residue S555 is modified to Phosphoserine. Residues 615 to 635 (VFLFYCIGLHGLVFMMSMYVI) traverse the membrane as a helical; Anchor for type IV membrane protein segment. Over 636-679 (NISGYMTPEVGIVQSAKSSSNLNGGLGGAEKVAAGVGSVHGINR) the chain is Lumenal.

This sequence belongs to the CASP family.

The protein resides in the golgi apparatus membrane. May be involved in intra-Golgi transport. This Saccharomyces cerevisiae (strain ATCC 204508 / S288c) (Baker's yeast) protein is Protein CASP (COY1).